A 91-amino-acid polypeptide reads, in one-letter code: Large ribosomal subunit protein bL27 (91 aa).

The disordered stretch occupies residues 1–26; it reads MAHKKGVGSSRNGRDSNPKMRGVKRF.

It belongs to the bacterial ribosomal protein bL27 family.

The chain is Large ribosomal subunit protein bL27 from Chloroflexus aurantiacus (strain ATCC 29366 / DSM 635 / J-10-fl).